The sequence spans 313 residues: MQRIGVTDYTILGTVKGAELELVRFTHPFMGFDVPAILGDHVTRMPVPVPFTPRLPRPGRLCDRSEIRPGKPLTRLARTALICRALIRRWMARTSYSDSVNCHTQPISAIFDYKDLRFEPPSNRISPAGQTSVDRLLQLSQGQAVEGQSAVARLTGEKKNHPGAQYANRLSPRIANNHPATQQTLFELGSGAKERNAINVSYLTALGTPGFTLMLPARMLCGIVSDNNFTQKQLCPSPARCTRGPAEPAKRGPWLEPGLVIRKDGLRTGKLLSSLRGLCLTVLRFQPTVPCFCRLALSSSVAISSTGLVNFSR.

Residues 1-15 (MQRIGVTDYTILGTV) form the signal peptide. Ser190 functions as the Acyl-ester intermediate in the catalytic mechanism.

Belongs to the class-C beta-lactamase family.

The catalysed reaction is a beta-lactam + H2O = a substituted beta-amino acid. In terms of biological role, upon expression in E.coli enables the latter to utilize penicillin as a carbon source. The sequence is that of Beta-lactamase (penA) from Burkholderia multivorans (strain ATCC 17616 / 249).